Consider the following 427-residue polypeptide: Indole diterpene prenyltransferase penD (427 aa).

77-78 is a binding site for L-tryptophan; it reads YV. Substrate contacts are provided by R99, K186, Y188, R259, K261, Y263, Y344, Y409, and Y413.

This sequence belongs to the tryptophan dimethylallyltransferase family.

It participates in secondary metabolite biosynthesis. In terms of biological role, indole diterpene prenyltransferase; part of the gene cluster that mediates the biosynthesis of the indole diterpenes penitrems. The geranylgeranyl diphosphate (GGPP) synthase penG catalyzes the first step in penitrem biosynthesis via conversion of farnesyl pyrophosphate and isopentyl pyrophosphate into geranylgeranyl pyrophosphate (GGPP). Condensation of indole-3-glycerol phosphate with GGPP by the prenyl transferase penC then forms 3-geranylgeranylindole (3-GGI). Epoxidation by the FAD-dependent monooxygenase penM leads to a epoxidized-GGI that is substrate of the terpene cyclase penB for cyclization to yield paspaline. Paspaline is subsequently converted to 13-desoxypaxilline by the cytochrome P450 monooxygenase penP, the latter being then converted to paxilline by the cytochrome P450 monooxygenase penQ. Paxilline is converted to beta-paxitriol via C-10 ketoreduction by the short-chain dehydrogenase PC-15 which can be monoprenylated at the C-20 by the indole diterpene prenyltransferase penD. A two-step elimination (acetylation and elimination) process performed by the O-acetyltransferase PC-16 and the P.simplicissimum ptmI-ortholog not yet identified in P.crustosum, leads to the production of the prenylated form of penijanthine. The FAD-linked oxidoreductase ptmO then converts the prenylated form of penijanthine into PC-M5 which is in turn transformed into PC-M4 by the aromatic dimethylallyltransferase PC-22. A series of oxidation steps involving 4 cytochrome P450 monooxygenases (PC-21, PC-05, PC-23, PC-20) and a FAD-dependent monooxygenase (PC-14) are required for the transformation of PC-M4 to penitrems A and E. Synthesis of these final products is proposed to proceed via penitrems D and C (PC-21, PC-05, PC-14) and penitrems B and F (PC-21, PC-05, PC-14, PC-23). In Penicillium crustosum (Blue mold fungus), this protein is Indole diterpene prenyltransferase penD.